The sequence spans 273 residues: uncharacterized protein (273 aa).

A compositionally biased stretch (basic residues) spans 1–10 (MSSKKVKYNP). 2 disordered regions span residues 1-32 (MSSKKVKYNPRKSASQNEATSASAGSKAFGFN) and 50-124 (EDVE…QSSP). 3 stretches are compositionally biased toward polar residues: residues 12–24 (KSASQNEATSASA), 55–64 (QSFNGKSSNL), and 92–124 (PQSSSQKPFASSTYNVELPTSPTKITNIGQSSP). S123 carries the post-translational modification Phosphoserine.

It localises to the nucleus. The protein resides in the cytoplasm. It is found in the cytoskeleton. The protein localises to the spindle. This is an uncharacterized protein from Schizosaccharomyces pombe (strain 972 / ATCC 24843) (Fission yeast).